The sequence spans 626 residues: Chaperone protein HtpG (626 aa).

The segment at 1–339 (MSQNQETRGF…SNDLPLNVSR (339 aa)) is a; substrate-binding. The tract at residues 340-555 (EILQDNKITA…NDQMTTQMAK (216 aa)) is b. Positions 556-626 (LFAAAGQPVP…FIKRINKLLG (71 aa)) are c.

It belongs to the heat shock protein 90 family. In terms of assembly, homodimer.

It is found in the cytoplasm. Its function is as follows. Molecular chaperone. Has ATPase activity. This is Chaperone protein HtpG from Haemophilus influenzae (strain PittGG).